Consider the following 79-residue polypeptide: Sulfur carrier protein TusA (79 aa).

Cysteine 17 functions as the Cysteine persulfide intermediate in the catalytic mechanism.

Belongs to the sulfur carrier protein TusA family.

Its subcellular location is the cytoplasm. Sulfur carrier protein which probably makes part of a sulfur-relay system. The chain is Sulfur carrier protein TusA from Haemophilus ducreyi (strain 35000HP / ATCC 700724).